The chain runs to 206 residues: Inner membrane protein YnjF (206 aa).

Residues 1–37 (MLDRHLHPRIKPLLHQCVRVLDKPGITPDGLTLVGFA) lie on the Periplasmic side of the membrane. Residues 38-60 (IGVLALPFLALGWYLAALVVILL) form a helical membrane-spanning segment. The Cytoplasmic segment spans residues 61 to 79 (NRLLDGLDGALARRRELTD). A helical transmembrane segment spans residues 80–102 (AGGFLDISLDFLFYALVPFGFIL). At 103 to 111 (AAPEQNALA) the chain is on the periplasmic side. A helical transmembrane segment spans residues 112–134 (GGWLLFAFIGTGSSFLAFAALAA). Topologically, residues 135-146 (KHQIDNPGYAHK) are cytoplasmic. Residues 147–169 (SFYYLGGLTEGTETILLFVLGCL) traverse the membrane as a helical segment. The Periplasmic segment spans residues 170–173 (FPAW). A helical transmembrane segment spans residues 174–196 (FAWFAWIFGALCWMTTFTRVWSG). Residues 197 to 206 (YLTLKSLQRQ) are Cytoplasmic-facing.

Belongs to the CDP-alcohol phosphatidyltransferase class-I family.

It is found in the cell inner membrane. The chain is Inner membrane protein YnjF (ynjF) from Escherichia coli (strain K12).